Reading from the N-terminus, the 468-residue chain is ATP synthase subunit beta (468 aa).

Residue Gly155–Thr162 participates in ATP binding.

The protein belongs to the ATPase alpha/beta chains family. F-type ATPases have 2 components, CF(1) - the catalytic core - and CF(0) - the membrane proton channel. CF(1) has five subunits: alpha(3), beta(3), gamma(1), delta(1), epsilon(1). CF(0) has three main subunits: a(1), b(2) and c(9-12). The alpha and beta chains form an alternating ring which encloses part of the gamma chain. CF(1) is attached to CF(0) by a central stalk formed by the gamma and epsilon chains, while a peripheral stalk is formed by the delta and b chains.

Its subcellular location is the cell membrane. It catalyses the reaction ATP + H2O + 4 H(+)(in) = ADP + phosphate + 5 H(+)(out). Functionally, produces ATP from ADP in the presence of a proton gradient across the membrane. The catalytic sites are hosted primarily by the beta subunits. The protein is ATP synthase subunit beta of Bacillus cereus (strain G9842).